The sequence spans 523 residues: 2-oxopropyl-CoM reductase, carboxylating (523 aa).

Ala53–Ala54 lines the FAD pocket. Arg56 provides a ligand contact to 2-oxopropyl-coenzyme M. Position 81 (Ser81) interacts with FAD. Cys82 is a 2-oxopropyl-coenzyme M binding site. Cys82 and Cys87 are oxidised to a cystine. Ala158 serves as a coordination point for FAD. Residues Gly222–Thr225 and Arg245–Thr246 each bind NADP(+). An FAD-binding site is contributed by Asp353. Residue Glu360 participates in NADP(+) binding. Met361 provides a ligand contact to FAD. Arg365 lines the 2-oxopropyl-coenzyme M pocket. FAD is bound at residue Phe501.

It belongs to the class-I pyridine nucleotide-disulfide oxidoreductase family. Homodimer. Component II of the aliphatic epoxide carboxylation complex together with components I, III and IV. Requires FAD as cofactor.

The catalysed reaction is coenzyme M + acetoacetate + NADP(+) = 2-oxopropyl-coenzyme M + CO2 + NADPH. It participates in alkene metabolism; propylene degradation. With respect to regulation, inhibited (at 40%) by the coenzyme M analog 2-bromoethanesulfonate (BES). BES is a time-dependent inactivator of dithiothreitol-reduced 2-KPCC, where the redox active cysteines are in the free thiol forms. BES does not inactivate air-oxidized 2-KPCC, where the redox active cysteine pair is in the disulfide form. BES specifically alkylates the interchange thiol that facilitates thioether bond cleavage and enolacetone formation during catalysis. Functionally, involved in aliphatic epoxide carboxylation. Catalyzes the reductive cleavage of the thioether bond of 2-oxopropyl-coenzyme M (2-KPC), and the subsequent carboxylation of the ketopropyl cleavage product, yielding the products acetoacetate and free coenzyme M. The protein is 2-oxopropyl-CoM reductase, carboxylating of Xanthobacter autotrophicus (strain ATCC BAA-1158 / Py2).